Reading from the N-terminus, the 2092-residue chain is Nonribosomal peptide synthetase echPS (2092 aa).

Residues 13 to 406 (FSQRCCQNPD…GRRDRVTKIR (394 aa)) are adenylation 1. The Carrier 1 domain maps to 524–600 (SGPLTIGQAI…SLIEKSRHET (77 aa)). Ser-561 is modified (O-(pantetheine 4'-phosphoryl)serine). Residues 596 to 626 (SRHETEDTPDSSAFATRTPEESSMPTQGPVT) are disordered. Residues 605 to 624 (DSSAFATRTPEESSMPTQGP) show a composition bias toward polar residues. Residues 624 to 1017 (PVTPLQKRMV…YTSLLDAFLD (394 aa)) are condensation 1. The segment at 1068–1446 (ASLYPTHVAV…GRKDRQVKVR (379 aa)) is adenylation 2. The region spanning 1544–1622 (IKTTHLEKLI…DLVILVAQQQ (79 aa)) is the Carrier 2 domain. Ser-1582 carries the O-(pantetheine 4'-phosphoryl)serine modification. Positions 1663 to 2047 (SQSQSTFNVS…EALLLECFRI (385 aa)) are condensation 2.

It belongs to the NRP synthetase family. Pantetheine 4'-phosphate serves as cofactor.

It carries out the reaction L-tryptophan + L-alanine + 2 ATP = cyclo(L-tryptophyl-L-alanyl) + 2 ADP + 2 phosphate + 2 H(+). The protein operates within secondary metabolite biosynthesis. Its pathway is alkaloid biosynthesis. In terms of biological role, nonribosomal peptide synthetase; part of the gene cluster that mediates the biosynthesis of echinulin family alkaloid. The pathway begins with the biosynthesis of the cyclic dipeptide cyclo-L-Trp-L-Ala (cyclo-TA) by the NRPS echPS via condensation of L-alanine and L-tryptophan. The prenyltransferase echPT1 then catalyzes the first prenylation step, a reverse prenylation reaction at C2, to yield preechinulin. Preechinulin is the substrate of the cytochrome P450 monooxygenase echP450 that catalyzes the formation of the double bond between C10 and C11 to produce neoechulin A. The unique prenyltransferase echPT2 functions as a competitive enzyme with echP450 for preechinulin metabolization and uses preechinulin for effective regiospecific prenylations. Preechinulin is prenylated by echPT2 at C5 or C7. C7-prenylation leads to accumulation of tardioxopiperazine B without further modification by echPT2. In contrast, the C5-prenylated tardioxopiperazine A can be prenylated again by echPT2, predominantly at C7 to form echinulin or less frequently at C4 to give variecolorin L. EchPT2 also accepts neoechilunin A to produce varlecolorin G (prenylation at C5) or isoechinulin A (prenylation at C7). EchPT2 further converts isoechinulin A into dehydroechinulin. Moreover, a yet unidentified enzyme can also convert neoechilunin A into neoechilunin B by introducing a double bond between positions C14 and C17 and thus provides a further substrate to echPT2 for C5 and C7 prenylation. The sequence is that of Nonribosomal peptide synthetase echPS from Aspergillus ruber (strain CBS 135680).